Consider the following 406-residue polypeptide: Serine hydroxymethyltransferase (406 aa).

(6S)-5,6,7,8-tetrahydrofolate-binding positions include Leu-111 and 115–117 (GHL). N6-(pyridoxal phosphate)lysine is present on Lys-220.

It belongs to the SHMT family. In terms of assembly, homodimer. The cofactor is pyridoxal 5'-phosphate.

It is found in the cytoplasm. The catalysed reaction is (6R)-5,10-methylene-5,6,7,8-tetrahydrofolate + glycine + H2O = (6S)-5,6,7,8-tetrahydrofolate + L-serine. Its pathway is one-carbon metabolism; tetrahydrofolate interconversion. It functions in the pathway amino-acid biosynthesis; glycine biosynthesis; glycine from L-serine: step 1/1. In terms of biological role, catalyzes the reversible interconversion of serine and glycine with tetrahydrofolate (THF) serving as the one-carbon carrier. This reaction serves as the major source of one-carbon groups required for the biosynthesis of purines, thymidylate, methionine, and other important biomolecules. Also exhibits THF-independent aldolase activity toward beta-hydroxyamino acids, producing glycine and aldehydes, via a retro-aldol mechanism. The polypeptide is Serine hydroxymethyltransferase (Mycoplasma pneumoniae (strain ATCC 29342 / M129 / Subtype 1) (Mycoplasmoides pneumoniae)).